A 240-amino-acid polypeptide reads, in one-letter code: EF-hand domain-containing protein D2 (240 aa).

An N-acetylalanine modification is found at alanine 2. Serine 11 is subject to Phosphoserine. The disordered stretch occupies residues 13–38 (RLQMEGEGGGETPEQPGLNGAAAAAA). 2 positions are modified to phosphoserine: serine 74 and serine 76. Tyrosine 83 carries the phosphotyrosine modification. EF-hand domains are found at residues 92–127 (KQIK…LGAP) and 128–163 (QTHL…AAAG). The Ca(2+) site is built by aspartate 105, aspartate 109, glutamate 116, aspartate 141, aspartate 143, aspartate 145, lysine 147, and glutamate 152. An N6-acetyllysine modification is found at lysine 233.

As to quaternary structure, interacts with CASP9; with inactive form. In terms of tissue distribution, found in lymphocytes; preferentially expressed in CD8+ cells.

Its subcellular location is the membrane raft. May regulate B-cell receptor (BCR)-induced immature and primary B-cell apoptosis. Plays a role as negative regulator of the canonical NF-kappa-B-activating branch. Controls spontaneous apoptosis through the regulation of BCL2L1 abundance. This Homo sapiens (Human) protein is EF-hand domain-containing protein D2 (EFHD2).